Reading from the N-terminus, the 185-residue chain is uncharacterized protein (185 aa).

3 helical membrane passes run L9–L29, V72–V92, and F111–L131.

The protein localises to the cell membrane. This is an uncharacterized protein from Bacillus subtilis (strain 168).